We begin with the raw amino-acid sequence, 158 residues long: Ribosome maturation factor RimP (158 aa).

Belongs to the RimP family.

It is found in the cytoplasm. Its function is as follows. Required for maturation of 30S ribosomal subunits. The polypeptide is Ribosome maturation factor RimP (Lactobacillus helveticus (strain DPC 4571)).